The sequence spans 525 residues: Cytochrome P450 monooxygenase bsc2 (525 aa).

A helical transmembrane segment spans residues serine 12 to isoleucine 32. Asparagine 86 and asparagine 317 each carry an N-linked (GlcNAc...) asparagine glycan. Cysteine 456 lines the heme pocket.

It belongs to the cytochrome P450 family. Heme serves as cofactor.

It is found in the membrane. The protein operates within mycotoxin biosynthesis. Cytochrome P450 monooxygenase; part of the gene cluster that mediates the biosynthesis of the diterpene glucoside brassicicene C. In the first step of the brassicicene C biosynthesis, the bifunctional diterpene synthase bsc8 that possesses both prenyl transferase and terpene cyclase activity, converts isopentenyl diphosphate and dimethylallyl diphosphate into geranylgeranyl diphosphate (GGDP) that is further converted into fusicocca-2,10(14)-diene, the first precursor for brassicicene C. Fusicocca-2,10(14)-diene is then substrate of cytochrome P450 monooxygenase bsc1 for hydroxylation at the C-8 position. Oxidation at C-16 position to aldehyde is then catalyzed by the cytochrome P450 monooyxygenase bsc7, yielding fusicocca-2,10(14)-diene-8-beta,16-diol. Follows the isomerization of the double bond and reduction of aldehyde to alcohol catalyzed by the short-chain dehydrogenase/reductase bsc3 to yield the diol compound fusicocca-1,10(14)-diene-8 beta,16-diol. The next step is the oxidation at the C-3 position of fusicocca-2,10(14)-diene-8-beta,16-diol catalyzed by the alpha-ketoglutarate dependent dioxygenase bsc9, to produce a triol compound. Methylation of the hydroxy group at position 16 is performed by the methyltransferase bsc6. 16-O-methylation is followed by oxidation at the C-13 position to ketone and an alkyl shift of the methyl group leads to brassicicene C. Although the probable acetyltransferase bsc4 is included in the gene cluster, no acetylation reactions are necessary for brassicicene C biosynthesis. However, the fact that brassicicene E, which is a structurally related compound having an acetoxy group at position 12, was previously isolated from another strain of A.brassicicola suggests that the ATCC 96836 strain might also produce a small amount of brassicicene E. The sequence is that of Cytochrome P450 monooxygenase bsc2 from Alternaria brassicicola (Dark leaf spot agent).